Reading from the N-terminus, the 550-residue chain is Cochlin (550 aa).

An N-terminal signal peptide occupies residues 1-24 (MWASWIPVLCLGVCLLLPPEPVGS). The 94-residue stretch at 28-121 (VPIPITCSTR…QMLSRWSASF (94 aa)) folds into the LCCL domain. Disulfide bonds link Cys-34/Cys-50 and Cys-54/Cys-74. Asn-100 carries N-linked (GlcNAc...) asparagine glycosylation. Polar residues predominate over residues 128 to 139 (SGTQEATGQAVS). The disordered stretch occupies residues 128-158 (SGTQEATGQAVSTAHPATGKRLKKTPEKKTG). 2 VWFA domains span residues 165-350 (DIAF…VQKL) and 367-537 (NIAF…VSDV). N-linked (GlcNAc...) asparagine glycosylation is found at Asn-221 and Asn-436.

Monomer. May form homodimer. Interacts with type II collagen. Interacts with SLC44A2. Interacts with ANXA2. In terms of processing, N-glycosylated.

The protein resides in the secreted. Its subcellular location is the extracellular space. In terms of biological role, plays a role in the control of cell shape and motility in the trabecular meshwork. The sequence is that of Cochlin (COCH) from Bos taurus (Bovine).